Reading from the N-terminus, the 507-residue chain is RNA-binding protein Nova-1 (507 aa).

Residues 1–44 are disordered; that stretch reads MMAAAPIQQNGTHTGVPIDLDPPDSRKRPLEAPPEAGSTKRTNT. The short motif at 27–43 is the Bipartite nuclear localization signal element; sequence KRPLEAPPEAGSTKRTN. The KH 1 domain maps to 49 to 116; it reads QYFLKVLIPS…EALNAVHGFI (68 aa). Residues 139–171 form a disordered region; sequence QTTVNPDRIKQTLPSSPTTTKSSPSDPMTTSRA. Residues 150–169 are compositionally biased toward low complexity; that stretch reads TLPSSPTTTKSSPSDPMTTS. At Ser-154 the chain carries Phosphoserine. 2 KH domains span residues 171 to 237 and 421 to 488; these read ANQV…VELI and KDVV…QYLI. The interval 419 to 503 is required for RNA binding; sequence GSKDVVEIAV…YEQGVRAANP (85 aa).

Interacts with PTBP2; the interaction is direct. As to expression, expressed in neurons of the cortex, sub-cortex, cerebellum and brainstem (at protein level). Expressed in motor neurons, but not in glia.

The protein localises to the nucleus. Functions to regulate alternative splicing in neurons by binding pre-mRNA in a sequence-specific manner to activate exon inclusion or exclusion. It binds specifically to the sequences 5'-YCAY-3' and regulates splicing in only a subset of regulated exons. Binding to an exonic 5'-YCAY-3' cluster changes the protein complexes assembled on pre-mRNA, blocking U1 snRNP binding and exon inclusion, whereas binding to an intronic 5'-YCAY-3' cluster enhances spliceosome assembly and exon inclusion. Binding to 5'-YCAY-3' clusters results in a local and asymmetric action to regulate spliceosome assembly and alternative splicing in neurons. Binding to an exonic 5'-YCAY-3' cluster changed the protein complexes assembled on pre-mRNA, blocking U1 snRNP (small nuclear ribonucleoprotein) binding and exon inclusion, whereas binding to an intronic 5'-YCAY-3' cluster enhanced spliceosome assembly and exon inclusion. With NOVA1, they perform unique biological functions in different brain areas and cell types. Autoregulates its own expression by acting as a splicing repressor. Acts to activate the inclusion of exon E3A in the glycine receptor alpha-2 chain and of exon E9 in gamma-aminobutyric-acid receptor gamma-2 subunit via a distal downstream UCAU-rich intronic splicing enhancer. Acts to regulate a novel glycine receptor alpha-2 chain splice variant (alpha-2N) in developing spinal cord. The sequence is that of RNA-binding protein Nova-1 from Mus musculus (Mouse).